A 318-amino-acid polypeptide reads, in one-letter code: Probable pyridoxal 5'-phosphate synthase subunit PDX1.1 (318 aa).

A D-ribose 5-phosphate-binding site is contributed by D49. K106 acts as the Schiff-base intermediate with D-ribose 5-phosphate in catalysis. G178 lines the D-ribose 5-phosphate pocket. Residue R190 participates in D-glyceraldehyde 3-phosphate binding. Residues G239 and 260–261 contribute to the D-ribose 5-phosphate site; that span reads GS.

This sequence belongs to the PdxS/SNZ family.

It carries out the reaction aldehydo-D-ribose 5-phosphate + D-glyceraldehyde 3-phosphate + L-glutamine = pyridoxal 5'-phosphate + L-glutamate + phosphate + 3 H2O + H(+). Its pathway is cofactor biosynthesis; pyridoxal 5'-phosphate biosynthesis. Catalyzes the formation of pyridoxal 5'-phosphate from ribose 5-phosphate (RBP), glyceraldehyde 3-phosphate (G3P) and ammonia. The ammonia is provided by PDX2. Can also use ribulose 5-phosphate and dihydroxyacetone phosphate as substrates, resulting from enzyme-catalyzed isomerization of RBP and G3P, respectively. Also plays an indirect role in resistance to singlet oxygen-generating photosensitizers. The polypeptide is Probable pyridoxal 5'-phosphate synthase subunit PDX1.1 (PDX11) (Oryza sativa subsp. japonica (Rice)).